The primary structure comprises 156 residues: tRNA (cytidine(34)-2'-O)-methyltransferase (156 aa).

S-adenosyl-L-methionine-binding residues include Gly-102, Leu-124, and Ser-132.

This sequence belongs to the class IV-like SAM-binding methyltransferase superfamily. RNA methyltransferase TrmH family. TrmL subfamily. Homodimer.

It is found in the cytoplasm. It carries out the reaction cytidine(34) in tRNA + S-adenosyl-L-methionine = 2'-O-methylcytidine(34) in tRNA + S-adenosyl-L-homocysteine + H(+). The enzyme catalyses 5-carboxymethylaminomethyluridine(34) in tRNA(Leu) + S-adenosyl-L-methionine = 5-carboxymethylaminomethyl-2'-O-methyluridine(34) in tRNA(Leu) + S-adenosyl-L-homocysteine + H(+). In terms of biological role, methylates the ribose at the nucleotide 34 wobble position in the two leucyl isoacceptors tRNA(Leu)(CmAA) and tRNA(Leu)(cmnm5UmAA). Catalyzes the methyl transfer from S-adenosyl-L-methionine to the 2'-OH of the wobble nucleotide. The protein is tRNA (cytidine(34)-2'-O)-methyltransferase of Burkholderia pseudomallei (strain 1106a).